The primary structure comprises 1131 residues: DNA polymerase II large subunit (1131 aa).

This sequence belongs to the archaeal DNA polymerase II family. As to quaternary structure, heterodimer of a large subunit and a small subunit.

It catalyses the reaction DNA(n) + a 2'-deoxyribonucleoside 5'-triphosphate = DNA(n+1) + diphosphate. It carries out the reaction Exonucleolytic cleavage in the 3'- to 5'-direction to yield nucleoside 5'-phosphates.. Its function is as follows. Possesses two activities: a DNA synthesis (polymerase) and an exonucleolytic activity that degrades single-stranded DNA in the 3'- to 5'-direction. Has a template-primer preference which is characteristic of a replicative DNA polymerase. The protein is DNA polymerase II large subunit of Methanococcus maripaludis (strain C5 / ATCC BAA-1333).